Consider the following 628-residue polypeptide: Putative serine esterase Mb1866c (628 aa).

Ser156 acts as the Acyl-ester intermediate in catalysis. Active-site charge relay system residues include Asp322 and His350.

This sequence belongs to the CocE/NonD hydrolase family.

The sequence is that of Putative serine esterase Mb1866c from Mycobacterium bovis (strain ATCC BAA-935 / AF2122/97).